The chain runs to 124 residues: Large ribosomal subunit protein bL12 (124 aa).

The protein belongs to the bacterial ribosomal protein bL12 family. Homodimer. Part of the ribosomal stalk of the 50S ribosomal subunit. Forms a multimeric L10(L12)X complex, where L10 forms an elongated spine to which 2 to 4 L12 dimers bind in a sequential fashion. Binds GTP-bound translation factors.

Forms part of the ribosomal stalk which helps the ribosome interact with GTP-bound translation factors. Is thus essential for accurate translation. In Cupriavidus necator (strain ATCC 17699 / DSM 428 / KCTC 22496 / NCIMB 10442 / H16 / Stanier 337) (Ralstonia eutropha), this protein is Large ribosomal subunit protein bL12.